The primary structure comprises 178 residues: Putative type II secretion system M-type protein YghD (178 aa).

Residues methionine 1–methionine 39 are Cytoplasmic-facing. Residues leucine 40–leucine 60 form a helical membrane-spanning segment. The Periplasmic segment spans residues serine 61–glycine 178.

It belongs to the GSP M family.

It is found in the cell inner membrane. Involved in a type II secretion system (T2SS, formerly general secretion pathway, GSP) for the export of folded proteins across the outer membrane. This Escherichia coli (strain K12) protein is Putative type II secretion system M-type protein YghD (yghD).